Consider the following 301-residue polypeptide: Probable alpha-L-glutamate ligase (301 aa).

The region spanning 104 to 287 is the ATP-grasp domain; that stretch reads LQLLSRKGVG…VAALVMEFIE (184 aa). ATP is bound by residues lysine 141, 178–179, aspartate 187, and 211–213; these read EY and RSN. Positions 248, 260, and 262 each coordinate Mg(2+). Residues aspartate 248, glutamate 260, and asparagine 262 each contribute to the Mn(2+) site.

The protein belongs to the RimK family. Requires Mg(2+) as cofactor. Mn(2+) is required as a cofactor.

This Saccharophagus degradans (strain 2-40 / ATCC 43961 / DSM 17024) protein is Probable alpha-L-glutamate ligase.